Here is a 668-residue protein sequence, read N- to C-terminus: Probable potassium transport system protein Kup (668 aa).

Transmembrane regions (helical) follow at residues 17 to 37 (GILV…LYVM), 59 to 79 (VSLI…VIAL), 104 to 124 (IIPA…TPAV), 148 to 168 (TIIV…QRFG), 175 to 195 (AFGP…LMNF), 221 to 241 (LGLF…ALYS), 256 to 276 (PYIK…LLTV), 299 to 319 (ILVF…QALI), 350 to 370 (MYIP…VLAF), 380 to 400 (YGLS…FYLL), 403 to 423 (IPAW…VVFF), and 430 to 450 (FFHG…IMII).

The protein belongs to the HAK/KUP transporter (TC 2.A.72) family.

It is found in the cell membrane. The enzyme catalyses K(+)(in) + H(+)(in) = K(+)(out) + H(+)(out). Functionally, transport of potassium into the cell. Likely operates as a K(+):H(+) symporter. The sequence is that of Probable potassium transport system protein Kup from Enterococcus faecalis (strain ATCC 700802 / V583).